Here is a 199-residue protein sequence, read N- to C-terminus: Outer-membrane lipoprotein LolB (199 aa).

Positions 1 to 28 (MSACPAPRSPFRWLHAFTLCLLLAVLAG) are cleaved as a signal peptide. A lipid anchor (N-palmitoyl cysteine) is attached at C29. Residue C29 is the site of S-diacylglycerol cysteine attachment.

The protein belongs to the LolB family. Monomer.

Its subcellular location is the cell outer membrane. In terms of biological role, plays a critical role in the incorporation of lipoproteins in the outer membrane after they are released by the LolA protein. In Bordetella bronchiseptica (strain ATCC BAA-588 / NCTC 13252 / RB50) (Alcaligenes bronchisepticus), this protein is Outer-membrane lipoprotein LolB.